The following is a 544-amino-acid chain: CTP synthase (544 aa).

The tract at residues 1-267 (MSKFIFVTGG…GDLLVSRLHL (267 aa)) is amidoligase domain. CTP is bound at residue Ser13. Ser13 contributes to the UTP binding site. 14-19 (SVGKGI) is a binding site for ATP. Tyr54 lines the L-glutamine pocket. Asp71 serves as a coordination point for ATP. Mg(2+) contacts are provided by Asp71 and Glu141. Residues 148-150 (DIE), 188-193 (KTKPTQ), and Lys224 contribute to the CTP site. UTP contacts are provided by residues 188-193 (KTKPTQ) and Lys224. In terms of domain architecture, Glutamine amidotransferase type-1 spans 299–534 (YVELKDAYYS…INAAKKVIRD (236 aa)). L-glutamine is bound at residue Gly354. Catalysis depends on Cys381, which acts as the Nucleophile; for glutamine hydrolysis. Residues 382 to 385 (LGMQ), Glu405, and Arg462 contribute to the L-glutamine site. Catalysis depends on residues His507 and Glu509.

The protein belongs to the CTP synthase family. In terms of assembly, homotetramer.

The enzyme catalyses UTP + L-glutamine + ATP + H2O = CTP + L-glutamate + ADP + phosphate + 2 H(+). The catalysed reaction is L-glutamine + H2O = L-glutamate + NH4(+). It carries out the reaction UTP + NH4(+) + ATP = CTP + ADP + phosphate + 2 H(+). Its pathway is pyrimidine metabolism; CTP biosynthesis via de novo pathway; CTP from UDP: step 2/2. Allosterically activated by GTP, when glutamine is the substrate; GTP has no effect on the reaction when ammonia is the substrate. The allosteric effector GTP functions by stabilizing the protein conformation that binds the tetrahedral intermediate(s) formed during glutamine hydrolysis. Inhibited by the product CTP, via allosteric rather than competitive inhibition. Catalyzes the ATP-dependent amination of UTP to CTP with either L-glutamine or ammonia as the source of nitrogen. Regulates intracellular CTP levels through interactions with the four ribonucleotide triphosphates. This Dehalococcoides mccartyi (strain ATCC BAA-2100 / JCM 16839 / KCTC 5957 / BAV1) protein is CTP synthase.